The primary structure comprises 1446 residues: DNA polymerase III PolC-type (1446 aa).

Residues 425–581 enclose the Exonuclease domain; sequence YVIFDVETTG…ADAESTGYLL (157 aa).

It belongs to the DNA polymerase type-C family. PolC subfamily.

It localises to the cytoplasm. The enzyme catalyses DNA(n) + a 2'-deoxyribonucleoside 5'-triphosphate = DNA(n+1) + diphosphate. Its function is as follows. Required for replicative DNA synthesis. This DNA polymerase also exhibits 3' to 5' exonuclease activity. The chain is DNA polymerase III PolC-type from Latilactobacillus sakei subsp. sakei (strain 23K) (Lactobacillus sakei subsp. sakei).